The primary structure comprises 129 residues: HTH-type transcriptional regulator DdrOP3 (129 aa).

The HTH cro/C1-type domain occupies 7-61 (LRELRQERGLRLKDIAGAAQISVPYLSDLERGRTNPSLETLQSLASTYGITVHDL). Positions 18-37 (LKDIAGAAQISVPYLSDLER) form a DNA-binding region, H-T-H motif.

In terms of processing, cleaved between Leu-106 and Arg-107 by the IrrE metalloprotease after exposure to radiation. Cleavage inactivates DdrOP3, leading to derepression of the target genes.

Repressor specific for genes preceded by a radiation/desiccation response motif (RDRM) site, which is present upstream of several radiation-induced genes. This Deinococcus deserti (strain DSM 17065 / CIP 109153 / LMG 22923 / VCD115) protein is HTH-type transcriptional regulator DdrOP3.